The chain runs to 191 residues: MQLNELNCVILCGGKSSRMGQDKSKLILKNQNLTQFQVNKFSKIFKNVYVSAKEDKFENHFNLIKDSLEFEVYSPMLALYSILSNFKNEFVFVLSVDSPKVGENELLKMLPFLEQNYKIIIAKTPLHKHPLCGFYHSSLAQTCKNFLEKNEQKIGFLFSEIKTKFVEFENEDAFLNLNFYEEYEKFKSELK.

Residues L11–G13, K23, D66, and D97 each bind GTP. Residue D97 participates in Mg(2+) binding.

It belongs to the MobA family. Monomer. The cofactor is Mg(2+).

It is found in the cytoplasm. It catalyses the reaction Mo-molybdopterin + GTP + H(+) = Mo-molybdopterin guanine dinucleotide + diphosphate. Functionally, transfers a GMP moiety from GTP to Mo-molybdopterin (Mo-MPT) cofactor (Moco or molybdenum cofactor) to form Mo-molybdopterin guanine dinucleotide (Mo-MGD) cofactor. The chain is Molybdenum cofactor guanylyltransferase from Campylobacter jejuni subsp. doylei (strain ATCC BAA-1458 / RM4099 / 269.97).